The primary structure comprises 86 residues: Testis-expressed protein 54 (86 aa).

Basic and acidic residues predominate over residues 1–34 (MGCCQDKNRWASDEQARDEVTEDGREGNEVDNSG). Disordered regions lie at residues 1 to 43 (MGCC…SNES) and 57 to 86 (SRRE…PEKG).

As to expression, expressed in Testis.

In Mus musculus (Mouse), this protein is Testis-expressed protein 54.